The chain runs to 645 residues: 1-deoxy-D-xylulose-5-phosphate synthase (645 aa).

Residues H83 and G124–S126 each bind thiamine diphosphate. Residue D155 participates in Mg(2+) binding. Thiamine diphosphate-binding positions include G156–S157, N184, Y295, and E376. Residue N184 coordinates Mg(2+).

Belongs to the transketolase family. DXPS subfamily. In terms of assembly, homodimer. The cofactor is Mg(2+). Requires thiamine diphosphate as cofactor.

The enzyme catalyses D-glyceraldehyde 3-phosphate + pyruvate + H(+) = 1-deoxy-D-xylulose 5-phosphate + CO2. Its pathway is metabolic intermediate biosynthesis; 1-deoxy-D-xylulose 5-phosphate biosynthesis; 1-deoxy-D-xylulose 5-phosphate from D-glyceraldehyde 3-phosphate and pyruvate: step 1/1. Functionally, catalyzes the acyloin condensation reaction between C atoms 2 and 3 of pyruvate and glyceraldehyde 3-phosphate to yield 1-deoxy-D-xylulose-5-phosphate (DXP). In Desulfotalea psychrophila (strain LSv54 / DSM 12343), this protein is 1-deoxy-D-xylulose-5-phosphate synthase.